The following is a 410-amino-acid chain: Lipid droplet-regulating VLDL assembly factor AUP1 (410 aa).

N-acetylmethionine is present on methionine 1. Over 1-20 (MEPPPAPGPERLFDSHRLPS) the chain is Cytoplasmic. An intramembrane segment occupies 21–41 (DGFLLLALLLYAPVGLCLLVL). Residues 42-410 (RLFLGLHVFL…FRERQAQEAE (369 aa)) lie on the Cytoplasmic side of the membrane. The tract at residues 258-295 (RLTPADKAEHMKRQRHPRLRPQSVQSSFPSPPSPSSDV) is disordered. Residue serine 292 is modified to Phosphoserine. One can recognise a CUE domain in the interval 296 to 338 (QLTTLAHRVKEVLPHVPLNVIQRDLARTGCVDLTITNLLEGAV). Positions 344–369 (DVTEGSQSPPAPSAPKFPSSGLATPQ) are disordered. Serine 363 bears the Phosphoserine mark. A Phosphothreonine modification is found at threonine 367.

Belongs to the AUP1 family. As to quaternary structure, identified in a complex that contains SEL1L, OS9, FAF2/UBXD8, UBE2J1/UBC6E and AUP1. Interacts with the cytoplasmic tail of ITGA2B, ITGA1, ITGA2, ITGA5, ITGAV and ITGAM. Interacts (via C-terminus) with UBE2G2; the interaction recruits UBE2G2 to lipid droplets. Interacts with ubiquitin ligases AMFR/gp78 and RNF139/TRC8; this promotes interaction of UBE2G2 with AMFR and RNF139. Interacts with apolipoprotein APOB. Post-translationally, monoubiquitinated and diubiquitinated. In terms of tissue distribution, ubiquitous.

It localises to the endoplasmic reticulum membrane. Its subcellular location is the lipid droplet. Functionally, plays a role in the translocation of terminally misfolded proteins from the endoplasmic reticulum lumen to the cytoplasm and their degradation by the proteasome. Plays a role in lipid droplet formation. Induces lipid droplet clustering. Recruits ubiquitin-conjugating enzyme UBE2G2 to lipid droplets which facilitates its interaction with ubiquitin ligases AMFR/gp78 and RNF139/TRC8, leading to sterol-induced ubiquitination of HMGCR and its subsequent proteasomal degradation. Also required for the degradation of INSIG1, SREBF1 and SREBF2. Plays a role in regulating assembly and secretion of very low density lipoprotein particles and stability of apolipoprotein APOB. In Mus musculus (Mouse), this protein is Lipid droplet-regulating VLDL assembly factor AUP1.